The chain runs to 204 residues: Transmembrane protein 253 (204 aa).

The next 4 membrane-spanning stretches (helical) occupy residues 33–53 (LVLA…TISV), 62–82 (LVTA…IITL), 96–116 (MMIS…IEVM), and 138–158 (LSAE…LFLL). The tract at residues 184-204 (EEVSGLENGPVVASTGNRTDE) is disordered.

It localises to the membrane. This is Transmembrane protein 253 (Tmem253) from Mus musculus (Mouse).